We begin with the raw amino-acid sequence, 102 residues long: Large ribosomal subunit protein bL28 (102 aa).

The protein belongs to the bacterial ribosomal protein bL28 family.

The protein is Large ribosomal subunit protein bL28 of Bradyrhizobium diazoefficiens (strain JCM 10833 / BCRC 13528 / IAM 13628 / NBRC 14792 / USDA 110).